Reading from the N-terminus, the 385-residue chain is Calcium/calmodulin-dependent protein kinase type 1D (385 aa).

Residues Phe-23–Ile-279 enclose the Protein kinase domain. Residues Leu-29 to Val-37 and Lys-52 each bind ATP. Residue Lys-113 forms a Glycyl lysine isopeptide (Lys-Gly) (interchain with G-Cter in SUMO2) linkage. Ser-122 is subject to Phosphoserine. The Proton acceptor role is filled by Asp-144. Thr-180 bears the Phosphothreonine; by CaMKK1 and CaMKK2 mark. Residues Ile-279–Met-319 are autoinhibitory domain. The segment at Lys-299 to Arg-320 is calmodulin-binding. A Nuclear export signal motif is present at residues His-318 to Leu-324. A disordered region spans residues Val-363–Lys-385. Polar residues predominate over residues Thr-375–Lys-385.

The protein belongs to the protein kinase superfamily. CAMK Ser/Thr protein kinase family. CaMK subfamily. In terms of tissue distribution, expressed ubiquitously with high levels in brain and low levels in kidney. Isoform 2 is highly expressed in brain compared to other tissues. In hematopoietic cell lines predominant expression was detected in T and EC cells.

It is found in the cytoplasm. It localises to the nucleus. It carries out the reaction L-seryl-[protein] + ATP = O-phospho-L-seryl-[protein] + ADP + H(+). The catalysed reaction is L-threonyl-[protein] + ATP = O-phospho-L-threonyl-[protein] + ADP + H(+). Activated by Ca(2+)/calmodulin. Binding of calmodulin results in conformational change that relieves intrasteric autoinhibition and allows phosphorylation of Thr-180 within the activation loop by CaMKK1 or CaMKK2. Phosphorylation of Thr-180 results in several fold increase in total activity. Unlike CaMK4, may be unable to exhibit autonomous activity after Ca(2+)/calmodulin activation. Calcium/calmodulin-dependent protein kinase that operates in the calcium-triggered CaMKK-CaMK1 signaling cascade and, upon calcium influx, activates CREB-dependent gene transcription, regulates calcium-mediated granulocyte function and respiratory burst and promotes basal dendritic growth of hippocampal neurons. In neutrophil cells, required for cytokine-induced proliferative responses and activation of the respiratory burst. Activates the transcription factor CREB1 in hippocampal neuron nuclei. May play a role in apoptosis of erythroleukemia cells. In vitro, phosphorylates transcription factor CREM isoform Beta. Isoform 1 but not isoform 2 activates CREB1. This Mus musculus (Mouse) protein is Calcium/calmodulin-dependent protein kinase type 1D (Camk1d).